A 98-amino-acid chain; its full sequence is Large ribosomal subunit protein uL23 (98 aa).

Belongs to the universal ribosomal protein uL23 family. In terms of assembly, part of the 50S ribosomal subunit. Contacts protein L29, and trigger factor when it is bound to the ribosome.

Its function is as follows. One of the early assembly proteins it binds 23S rRNA. One of the proteins that surrounds the polypeptide exit tunnel on the outside of the ribosome. Forms the main docking site for trigger factor binding to the ribosome. The chain is Large ribosomal subunit protein uL23 from Borrelia garinii subsp. bavariensis (strain ATCC BAA-2496 / DSM 23469 / PBi) (Borreliella bavariensis).